Reading from the N-terminus, the 401-residue chain is MVVSVKVFKKATPNGKVTFYLGRRHFIDHFDYIDPVDGVIVVDPDYLKNRKVFAQLATIYRYGREEDEVMGVKFSKELILCREQIVPMGNSNMEMTPTQEKLVRKLGSNAHPFTFHFPPNSPSSVTLQQEGDDLGKPLGVEYTIRAYVADSEDDRQHKRSMVSLVIKKLQYAPPTRGQRLPSSLVSKGFTFSNGKISLEVTLDREIYYHGGKVAATVQINNNSKKAVKNIKVFIIQHTEITMVNAQFSKHVAQLETKEGCPITPGANLSKTFYLIPLASNNKDRHGIALDGHLKDEDVNLASSTMVQDGKSTGDACGIVISYSVRIKLNCGTLGGEIQTDVPFKLLQPAPGSVEKKRSNAMKKMKSIEQHRNTKGYYQDDDDNIVFEDFAKMRNNNADVMD.

Belongs to the arrestin family.

Functionally, directly interacts with light-activated rhodopsin thereby activating the phosphorylation of metarhodopsin. Inhibits the dephosphorylation of metarhodopsin. This chain is Phosrestin-1 (ARR2), found in Calliphora vicina (Blue blowfly).